Consider the following 458-residue polypeptide: RuvB-like protein 1 (458 aa).

73–80 (GPPGTGKT) lines the ATP pocket.

This sequence belongs to the RuvB family. In terms of assembly, interacts with FRI, and with FLX and FES1, two component of the transcription activator complex FRI-C. Interacts with the disease resistance genes RPM1 and RPP5.

Its subcellular location is the nucleus. It catalyses the reaction ATP + H2O = ADP + phosphate + H(+). Proposed core component of the chromatin remodeling INO80 complex which is involved in transcriptional regulation, DNA replication and probably DNA repair. Component of the NuA4 histone acetyltransferase complex which is involved in transcriptional activation of select genes principally by acetylation of nucleosomal histones H4 and H2A. Has single-stranded DNA-stimulated ATPase and ATP-dependent DNA helicase (3' to 5') activity suggesting a role in nuclear processes such as recombination and transcription. The sequence is that of RuvB-like protein 1 (RIN1) from Arabidopsis thaliana (Mouse-ear cress).